The chain runs to 276 residues: Large ribosomal subunit protein uL2 (276 aa).

Disordered regions lie at residues 34-55 (LQPLKNNAGRNNNGRITVRHQG) and 221-276 (RGSV…RRTK). A compositionally biased stretch (polar residues) spans 37–48 (LKNNAGRNNNGR).

It belongs to the universal ribosomal protein uL2 family. Part of the 50S ribosomal subunit. Forms a bridge to the 30S subunit in the 70S ribosome.

In terms of biological role, one of the primary rRNA binding proteins. Required for association of the 30S and 50S subunits to form the 70S ribosome, for tRNA binding and peptide bond formation. It has been suggested to have peptidyltransferase activity; this is somewhat controversial. Makes several contacts with the 16S rRNA in the 70S ribosome. The polypeptide is Large ribosomal subunit protein uL2 (Enterococcus faecalis (strain ATCC 700802 / V583)).